The primary structure comprises 110 residues: Ribonuclease P protein component 4 (110 aa).

Residues cysteine 65, cysteine 68, cysteine 94, and cysteine 97 each contribute to the Zn(2+) site.

The protein belongs to the eukaryotic/archaeal RNase P protein component 4 family. As to quaternary structure, consists of a catalytic RNA component and at least 4-5 protein subunits. Zn(2+) is required as a cofactor.

It localises to the cytoplasm. The catalysed reaction is Endonucleolytic cleavage of RNA, removing 5'-extranucleotides from tRNA precursor.. Its function is as follows. Part of ribonuclease P, a protein complex that generates mature tRNA molecules by cleaving their 5'-ends. The polypeptide is Ribonuclease P protein component 4 (Methanococcus maripaludis (strain C7 / ATCC BAA-1331)).